Reading from the N-terminus, the 384-residue chain is Mitogen-activated protein kinase 8 (384 aa).

Positions 26–321 (YQNLRPIGSG…VDEALQHPYI (296 aa)) constitute a Protein kinase domain. ATP-binding positions include 33–38 (GSGAQG) and Lys55. Asp151 acts as the Proton acceptor in catalysis. Thr183 is modified (phosphothreonine). Positions 183–185 (TPY) match the TXY motif. A Phosphotyrosine modification is found at Tyr185.

This sequence belongs to the protein kinase superfamily. CMGC Ser/Thr protein kinase family. MAP kinase subfamily. It depends on Mg(2+) as a cofactor. In terms of processing, dually phosphorylated on Thr-183 and Tyr-185, which activates the enzyme.

Its subcellular location is the cytoplasm. It is found in the nucleus. The protein resides in the synapse. It catalyses the reaction L-seryl-[protein] + ATP = O-phospho-L-seryl-[protein] + ADP + H(+). The catalysed reaction is L-threonyl-[protein] + ATP = O-phospho-L-threonyl-[protein] + ADP + H(+). With respect to regulation, activated by threonine and tyrosine phosphorylation. Responds to activation by environmental stress and pro-inflammatory cytokines by phosphorylating a number of transcription factors, primarily components of AP-1 such as c-Jun and ATF2 and thus regulates AP-1 transcriptional activity. May play a role in the regulation of the circadian clock. The chain is Mitogen-activated protein kinase 8 (mapk8) from Danio rerio (Zebrafish).